The sequence spans 407 residues: Elongation factor Tu (407 aa).

The tr-type G domain occupies 10-217 (KPHVNVGTIG…TLDEYIPEPE (208 aa)). The segment at 19 to 26 (GHVDHGKT) is G1. 19 to 26 (GHVDHGKT) contributes to the GTP binding site. Threonine 26 is a binding site for Mg(2+). The interval 60–64 (GITIA) is G2. Residues 81–84 (DCPG) form a G3 region. Residues 81–85 (DCPGH) and 136–139 (NKAD) contribute to the GTP site. Residues 136-139 (NKAD) form a G4 region. The interval 184-186 (SAL) is G5.

It belongs to the TRAFAC class translation factor GTPase superfamily. Classic translation factor GTPase family. EF-Tu/EF-1A subfamily. As to quaternary structure, monomer.

The protein localises to the cytoplasm. It carries out the reaction GTP + H2O = GDP + phosphate + H(+). Functionally, GTP hydrolase that promotes the GTP-dependent binding of aminoacyl-tRNA to the A-site of ribosomes during protein biosynthesis. In Teredinibacter turnerae (strain ATCC 39867 / T7901), this protein is Elongation factor Tu.